Reading from the N-terminus, the 109-residue chain is UPF0122 protein BH2485 (109 aa).

This sequence belongs to the UPF0122 family.

Might take part in the signal recognition particle (SRP) pathway. This is inferred from the conservation of its genetic proximity to ftsY/ffh. May be a regulatory protein. The sequence is that of UPF0122 protein BH2485 from Halalkalibacterium halodurans (strain ATCC BAA-125 / DSM 18197 / FERM 7344 / JCM 9153 / C-125) (Bacillus halodurans).